A 122-amino-acid polypeptide reads, in one-letter code: Large ribosomal subunit protein uL14 (122 aa).

Belongs to the universal ribosomal protein uL14 family. As to quaternary structure, part of the 50S ribosomal subunit. Forms a cluster with proteins L3 and L19. In the 70S ribosome, L14 and L19 interact and together make contacts with the 16S rRNA in bridges B5 and B8.

Its function is as follows. Binds to 23S rRNA. Forms part of two intersubunit bridges in the 70S ribosome. This Corynebacterium efficiens (strain DSM 44549 / YS-314 / AJ 12310 / JCM 11189 / NBRC 100395) protein is Large ribosomal subunit protein uL14.